The primary structure comprises 437 residues: Lipid II isoglutaminyl synthase (glutamine-hydrolyzing) subunit MurT (437 aa).

Zn(2+) is bound by residues Cys202, Cys205, Cys224, and Cys226. Asp349 is a catalytic residue.

Belongs to the MurCDEF family. MurT subfamily. As to quaternary structure, forms a heterodimer with GatD.

It carries out the reaction beta-D-GlcNAc-(1-&gt;4)-Mur2Ac(oyl-L-Ala-gamma-D-Glu-L-Lys-D-Ala-D-Ala)-di-trans,octa-cis-undecaprenyl diphosphate + L-glutamine + ATP + H2O = beta-D-GlcNAc-(1-&gt;4)-Mur2Ac(oyl-L-Ala-D-isoglutaminyl-L-Lys-D-Ala-D-Ala)-di-trans,octa-cis-undecaprenyl diphosphate + L-glutamate + ADP + phosphate + H(+). The catalysed reaction is beta-D-GlcNAc-(1-&gt;4)-Mur2Ac(oyl-L-Ala-gamma-D-Glu-L-Lys-D-Ala-D-Ala)-di-trans,octa-cis-undecaprenyl diphosphate + ATP = beta-D-GlcNAc-(1-&gt;4)-Mur2Ac(oyl-L-Ala-gamma-D-O-P-Glu-L-Lys-D-Ala-D-Ala)-di-trans,octa-cis-undecaprenyl diphosphate + ADP. It catalyses the reaction beta-D-GlcNAc-(1-&gt;4)-Mur2Ac(oyl-L-Ala-gamma-D-O-P-Glu-L-Lys-D-Ala-D-Ala)-di-trans,octa-cis-undecaprenyl diphosphate + NH4(+) = beta-D-GlcNAc-(1-&gt;4)-Mur2Ac(oyl-L-Ala-D-isoglutaminyl-L-Lys-D-Ala-D-Ala)-di-trans,octa-cis-undecaprenyl diphosphate + phosphate + H(+). It functions in the pathway cell wall biogenesis; peptidoglycan biosynthesis. In terms of biological role, the lipid II isoglutaminyl synthase complex catalyzes the formation of alpha-D-isoglutamine in the cell wall lipid II stem peptide. The MurT subunit catalyzes the ATP-dependent amidation of D-glutamate residue of lipid II, converting it to an isoglutamine residue. The sequence is that of Lipid II isoglutaminyl synthase (glutamine-hydrolyzing) subunit MurT from Staphylococcus aureus (strain N315).